We begin with the raw amino-acid sequence, 1507 residues long: Protein TIC 214 (1507 aa).

6 helical membrane-spanning segments follow: residues 4–24, 53–73, 81–101, 129–149, 163–183, and 202–222; these read IYLV…LPIG, TILL…VLAL, LWVK…IYLY, AFLE…NPVF, ISTF…IFFL, and LVKI…SFLC.

This sequence belongs to the TIC214 family. In terms of assembly, part of the Tic complex.

The protein localises to the plastid. Its subcellular location is the chloroplast inner membrane. Its function is as follows. Involved in protein precursor import into chloroplasts. May be part of an intermediate translocation complex acting as a protein-conducting channel at the inner envelope. In Staurastrum punctulatum (Green alga), this protein is Protein TIC 214.